The following is a 446-amino-acid chain: N-succinylarginine dihydrolase 2 (446 aa).

Substrate is bound by residues 20 to 29 (VGLSPGNLAS), N111, and 138 to 139 (HR). E175 is a catalytic residue. R212 is a binding site for substrate. Residue H246 is part of the active site. Substrate is bound by residues D248 and N361. The active-site Nucleophile is the C367.

This sequence belongs to the succinylarginine dihydrolase family. Homodimer.

The enzyme catalyses N(2)-succinyl-L-arginine + 2 H2O + 2 H(+) = N(2)-succinyl-L-ornithine + 2 NH4(+) + CO2. Its pathway is amino-acid degradation; L-arginine degradation via AST pathway; L-glutamate and succinate from L-arginine: step 2/5. In terms of biological role, catalyzes the hydrolysis of N(2)-succinylarginine into N(2)-succinylornithine, ammonia and CO(2). This Caulobacter vibrioides (strain ATCC 19089 / CIP 103742 / CB 15) (Caulobacter crescentus) protein is N-succinylarginine dihydrolase 2.